The primary structure comprises 302 residues: MKIIAVLGSSGSGKSALAHRIAMEQNCKIFSLDSLSIYKYLDIASAKPTLLEQSQVCYYALNILEPHQKSNVMIFKDLLLQSIEDIKNNSPHTPLLIVGGSSFFLKSIMEGLSPMPPLEEHEEWVKSLGNISMQYAQLTQIDKTYAQSLSPTDTYRICKALALFKATNTPPSIYFATHKKESLGYDIEIFCLECERDELRERIAKRTKAMIQKGIVEEVQNVLEAYGAQAPALNAIGAKECVNFLQGKVATLQQLEEQIFFHTCQLAKRQRTFNRTQFAQITHLKEKALEAQLIQQIHNNIL.

Residue 8–15 (GSSGSGKS) coordinates ATP. Residue 10 to 15 (SGSGKS) participates in substrate binding. Residues 33 to 36 (DSLS) form an interaction with substrate tRNA region.

Belongs to the IPP transferase family. As to quaternary structure, monomer. Mg(2+) serves as cofactor.

The enzyme catalyses adenosine(37) in tRNA + dimethylallyl diphosphate = N(6)-dimethylallyladenosine(37) in tRNA + diphosphate. Functionally, catalyzes the transfer of a dimethylallyl group onto the adenine at position 37 in tRNAs that read codons beginning with uridine, leading to the formation of N6-(dimethylallyl)adenosine (i(6)A). This is tRNA dimethylallyltransferase from Helicobacter hepaticus (strain ATCC 51449 / 3B1).